Consider the following 540-residue polypeptide: MNIMMVQNISFLSLHLLLILLLCLRPLTTVADGNSTNIDGWCDKTPYPYPCKRYFIKHSGFRLPTQISEFRVLLVEAAMDRAVSAWDKLTNSSKNCTDFKKQAVLADCINLYGDTVMQLNRTLQGVSSKTGRRCTDFDAQTWLSTALTNTETCRRGSSDLNVSDFTTPIVSNTKISHLISNCLAVNGALLTAGKNDSTTGDSKGFPTWVSRKERRLLQLQSVRANLVVAKDGSGHFKTVQAAIDVAGRRKVTSGRFVIYVKRGIYQENLNVRLNNDNIMLVGDGMRYTIITGGRSVKGGYTTYSSATAGIEGLHFIAKGIAFQNTAGPAKGQAVALRSSSDLSIFYRCSIEGYQDTLMVHSQRQFYRECYIYGTVDFIFGNAAVVFQNCIILPRLPLKGQANVITAQGRTDLFQNTGISIHNSIIIPAPDLKPVVRSVKTYMGRPWMMYSRTVVLKTYIDSVVSPVGWSPWTKGSTYGLDTLFYAEYKNIGPASSTRWRVRWKGFHVLSKASDASAFSVGKFIAGTAWLPGSGIPFTSEL.

The signal sequence occupies residues 1 to 31; it reads MNIMMVQNISFLSLHLLLILLLCLRPLTTVA. The tract at residues 32–185 is pectinesterase inhibitor 60; that stretch reads DGNSTNIDGW…SHLISNCLAV (154 aa). N-linked (GlcNAc...) asparagine glycans are attached at residues N34, N91, N95, N120, N161, and N195. Residues 225 to 526 form a pectinesterase 60 region; it reads NLVVAKDGSG…FSVGKFIAGT (302 aa). Substrate is bound by residues T302 and Q332. Residue D355 is the Proton donor; for pectinesterase activity of the active site. A disulfide bridge connects residues C369 and C389. Catalysis depends on D376, which acts as the Nucleophile; for pectinesterase activity. 2 residues coordinate substrate: R444 and W446.

This sequence in the N-terminal section; belongs to the PMEI family. In the C-terminal section; belongs to the pectinesterase family. In terms of tissue distribution, expressed in siliques.

The protein localises to the secreted. It is found in the cell wall. The enzyme catalyses [(1-&gt;4)-alpha-D-galacturonosyl methyl ester](n) + n H2O = [(1-&gt;4)-alpha-D-galacturonosyl](n) + n methanol + n H(+). It participates in glycan metabolism; pectin degradation; 2-dehydro-3-deoxy-D-gluconate from pectin: step 1/5. Functionally, acts in the modification of cell walls via demethylesterification of cell wall pectin. The polypeptide is Probable pectinesterase/pectinesterase inhibitor 60 (PME60) (Arabidopsis thaliana (Mouse-ear cress)).